The chain runs to 351 residues: Transcription factor Atoh1 (351 aa).

Disordered regions lie at residues 16 to 39 (LGDH…PATL) and 89 to 116 (EAAA…SKSP). Residues 26–36 (HHVPPLTPQPP) are compositionally biased toward pro residues. The region spanning 156–208 (QRRLAANARERRRMHGLNHAFDQLRNVIPSFNNDKKLSKYETLQMAQIYINAL) is the bHLH domain. Disordered regions lie at residues 244 to 278 (GAGA…GPAS) and 308 to 351 (LSPS…DEAS). The span at 247–256 (ASAVAGAQPA) shows a compositional bias: low complexity. The segment covering 258-268 (GGGPRPTPPGP) has biased composition (pro residues). The span at 332 to 351 (HRSDGEFSPHSHYSDSDEAS) shows a compositional bias: basic and acidic residues.

In terms of assembly, efficient DNA binding requires dimerization with another bHLH protein. In terms of tissue distribution, developing nervous system, and in adult epithelial cells of the gastrointestinal tract.

The protein resides in the nucleus. In terms of biological role, transcriptional regulator. Activates E box-dependent transcription in collaboration with TCF3/E47, but the activity is completely antagonized by the negative regulator of neurogenesis HES1. Plays a role in the differentiation of subsets of neural cells by activating E box-dependent transcription. The polypeptide is Transcription factor Atoh1 (Mus musculus (Mouse)).